Consider the following 633-residue polypeptide: Pentatricopeptide repeat-containing protein At1g43980, mitochondrial (633 aa).

Residues 1–30 constitute a mitochondrion transit peptide; that stretch reads MFQLLRRAHGLCMPSSLYFSRLVNRSLLSK. PPR repeat units lie at residues 50–80, 81–111, 112–146, 147–178, 180–210, 211–245, 246–280, 281–311, 312–346, 347–380, 381–411, 412–447, 448–483, and 484–514; these read TTYWGNRCLQLYFKSGSVINALQLFDDIPDK, NTITWNVCLKGLFKNGYLNNALDLFDEMPER, DVVSWNTMISGLVSCGFHEYGIRVFFDMQRWEIRP, TEFTFSILASLVTCVRHGEQIHGNAICSGVSR, NLVVWNSVMDMYRRLGVFDYALSVFLTMEDR, DVVSWNCLILSCSDSGNKEVALDQFWLMREMEIQP, DEYTVSMVVSICSDLRELSKGKQALALCIKMGFLS, NSIVLGAGIDMFSKCNRLDDSVKLFRELEKW, DSVLCNSMIGSYSWHCCGEDALRLFILAMTQSVRP, DKFTFSSVLSSMNAVMLDHGADVHSLVIKLGFDL, DTAVATSLMEMYFKTGSVDLAMGVFAKTDGK, DLIFWNTVIMGLARNSRAVESLAIFNQLLMNQSLKP, DRVTLMGILVACCYAGFVNEGIQIFSSMEKAHGVNP, and GNEHYACIIELLCRVGMINEAKDIADKIPFE. Positions 519-594 are type E motif; the sequence is IWEPILCASL…AQGSSKISIE (76 aa).

It belongs to the PPR family. PCMP-E subfamily.

Its subcellular location is the mitochondrion. This is Pentatricopeptide repeat-containing protein At1g43980, mitochondrial (PCMP-E58) from Arabidopsis thaliana (Mouse-ear cress).